The sequence spans 120 residues: uncharacterized protein (120 aa).

To M.tuberculosis Rv0026 and Rv0739.

This is an uncharacterized protein from Mycobacterium tuberculosis (strain CDC 1551 / Oshkosh).